The primary structure comprises 572 residues: Transcription factor E3 (572 aa).

Residue S47 is modified to Phosphoserine; by MTOR. Over residues 87–125 the composition is skewed to low complexity; it reads TTPATLSASSSAGGSRTPAMSSSSSRVLLRQQLMRAQAQ. The tract at residues 87 to 152 is disordered; it reads TTPATLSASS…SPAPASPAIS (66 aa). Basic and acidic residues predominate over residues 126 to 135; it reads EQERRERREQ. The residue at position 187 (R187) is an Asymmetric dimethylarginine. Residues 210–248 form a disordered region; that stretch reads LASQALTPPPGPSSAQPLPAPETAHATGPTGSAPNSPMA. A strong transcription activation domain region spans residues 259-270; sequence EIDDVIDEIISL. The residue at position 320 (S320) is a Phosphoserine; by MTOR. A Glycyl lysine isopeptide (Lys-Gly) (interchain with G-Cter in SUMO2) cross-link involves residue K338. Residues 345–398 enclose the bHLH domain; that stretch reads QKKDNHNLIERRRRFNINDRIKELGTLIPKSNDPEMRWNKGTILKASVDYIRKL. The short motif at 355–358 is the Nuclear localization signal element; sequence RRRR. A leucine-zipper region spans residues 408 to 429; that stretch reads LESRQRSLEQANRSLQLRIQEL. Disordered regions lie at residues 439-495 and 530-572; these read PVPP…APPS and VGGL…EEES. Over residues 446–457 the composition is skewed to low complexity; that stretch reads LLSLTTSSVSDS. Residues S539, S545, S551, S553, S557, and S565 each carry the phosphoserine modification. The segment covering 543-572 has biased composition (low complexity); sequence AASDPLLSSVSPAVSKASSRRSSFSMEEES.

It belongs to the MiT/TFE family. As to quaternary structure, homodimer and heterodimer; with TFEB or MITF. Interacts with RRAGC/RagC GDP-bound and RRAGD/RagD GDP-bound; promoting its recruitment to lysosomal membrane in the presence of nutrients. Interacts with TSC22D1; the interaction is enhanced in the presence of TGF-beta. In terms of processing, sumoylated; does not affect dimerization with MITF. Phosphorylation ar Ser-47 and Ser-320 by MTOR via non-canonical mTORC1 pathway regulates its stability and subcellular location, respectively. When nutrients are present, phosphorylation by MTOR at Ser-47 promotes ubiquitination by the SCF(BTRC) complex, followed by degradation. When nutrients are present, phosphorylation by MTOR at Ser-320 also promotes association with 14-3-3/YWHA adapters and retention in the cytosol. Phosphorylation at Ser-47 plays a more critical role than phosphorylation at Ser-320 for TFE3 inactivation. Inhibition of mTORC1, starvation and lysosomal disruption, promotes dephosphorylation and transcription factor activity. Post-translationally, ubiquitinated by the SCF(BTRC) and SCF(FBXW11) complexes following phosphorylation at Ser-47 by MTOR, leading to its degradation by the proteasome. As to expression, widely expressed.

It is found in the cytoplasm. The protein localises to the cytosol. It localises to the nucleus. Its subcellular location is the lysosome membrane. In terms of biological role, transcription factor that acts as a master regulator of lysosomal biogenesis and immune response. Specifically recognizes and binds E-box sequences (5'-CANNTG-3'); efficient DNA-binding requires dimerization with itself or with another MiT/TFE family member such as TFEB or MITF. Involved in the cellular response to amino acid availability by acting downstream of MTOR: in the presence of nutrients, TFE3 phosphorylation by MTOR promotes its inactivation. Upon starvation or lysosomal stress, inhibition of MTOR induces TFE3 dephosphorylation, resulting in transcription factor activity. Specifically recognizes and binds the CLEAR-box sequence (5'-GTCACGTGAC-3') present in the regulatory region of many lysosomal genes, leading to activate their expression, thereby playing a central role in expression of lysosomal genes. Maintains the pluripotent state of embryonic stem cells by promoting the expression of genes such as ESRRB; mTOR-dependent TFE3 cytosolic retention and inactivation promotes exit from pluripotency. Required to maintain the naive pluripotent state of hematopoietic stem cell; mTOR-dependent cytoplasmic retention of TFE3 promotes the exit of hematopoietic stem cell from pluripotency. TFE3 activity is also involved in the inhibition of neuronal progenitor differentiation. Acts as a positive regulator of browning of adipose tissue by promoting expression of target genes; mTOR-dependent phosphorylation promotes cytoplasmic retention of TFE3 and inhibits browning of adipose tissue. In association with TFEB, activates the expression of CD40L in T-cells, thereby playing a role in T-cell-dependent antibody responses in activated CD4(+) T-cells and thymus-dependent humoral immunity. Specifically recognizes the MUE3 box, a subset of E-boxes, present in the immunoglobulin enhancer. It also binds very well to a USF/MLTF site. Promotes TGF-beta-induced transcription of COL1A2; via its interaction with TSC22D1 at E-boxes in the gene proximal promoter. May regulate lysosomal positioning in response to nutrient deprivation by promoting the expression of PIP4P1. The sequence is that of Transcription factor E3 from Mus musculus (Mouse).